Here is a 240-residue protein sequence, read N- to C-terminus: Large ribosomal subunit protein bL25 (240 aa).

Disordered stretches follow at residues methionine 1–arginine 20 and glycine 204–lysine 240. Low complexity predominate over residues glycine 204–glycine 229. Over residues glycine 230–lysine 240 the composition is skewed to basic and acidic residues.

It belongs to the bacterial ribosomal protein bL25 family. CTC subfamily. As to quaternary structure, part of the 50S ribosomal subunit; part of the 5S rRNA/L5/L18/L25 subcomplex. Contacts the 5S rRNA. Binds to the 5S rRNA independently of L5 and L18.

In terms of biological role, this is one of the proteins that binds to the 5S RNA in the ribosome where it forms part of the central protuberance. This Anaeromyxobacter sp. (strain K) protein is Large ribosomal subunit protein bL25.